Here is a 448-residue protein sequence, read N- to C-terminus: Protein TraN (448 aa).

2 disordered regions span residues 243–273 (NRVG…NSGE) and 411–448 (EAAR…NKPS). Over residues 246-261 (GASRTATTARAGQQQS) the composition is skewed to low complexity. The segment covering 262 to 271 (PAVKQSSGNS) has biased composition (polar residues). Residues 421–437 (RKQEQEKKQAQERERGR) show a composition bias toward basic and acidic residues. The segment covering 438-448 (SQSLGLSNKPS) has biased composition (polar residues).

To H.influenzae HI_1407.

This Escherichia coli protein is Protein TraN (traN).